The chain runs to 370 residues: tRNA 2-selenouridine synthase (370 aa).

The 125-residue stretch at 12–136 folds into the Rhodanese domain; sequence FLDDVPMMDM…MRTFLLETTQ (125 aa). The active-site S-selanylcysteine intermediate is Cys-95.

This sequence belongs to the SelU family. As to quaternary structure, monomer.

It catalyses the reaction 5-methylaminomethyl-2-thiouridine(34) in tRNA + selenophosphate + (2E)-geranyl diphosphate + H2O + H(+) = 5-methylaminomethyl-2-selenouridine(34) in tRNA + (2E)-thiogeraniol + phosphate + diphosphate. The enzyme catalyses 5-methylaminomethyl-2-thiouridine(34) in tRNA + (2E)-geranyl diphosphate = 5-methylaminomethyl-S-(2E)-geranyl-thiouridine(34) in tRNA + diphosphate. The catalysed reaction is 5-methylaminomethyl-S-(2E)-geranyl-thiouridine(34) in tRNA + selenophosphate + H(+) = 5-methylaminomethyl-2-(Se-phospho)selenouridine(34) in tRNA + (2E)-thiogeraniol. It carries out the reaction 5-methylaminomethyl-2-(Se-phospho)selenouridine(34) in tRNA + H2O = 5-methylaminomethyl-2-selenouridine(34) in tRNA + phosphate. In terms of biological role, involved in the post-transcriptional modification of the uridine at the wobble position (U34) of tRNA(Lys), tRNA(Glu) and tRNA(Gln). Catalyzes the conversion of 2-thiouridine (S2U-RNA) to 2-selenouridine (Se2U-RNA). Acts in a two-step process involving geranylation of 2-thiouridine (S2U) to S-geranyl-2-thiouridine (geS2U) and subsequent selenation of the latter derivative to 2-selenouridine (Se2U) in the tRNA chain. This is tRNA 2-selenouridine synthase from Pseudomonas putida (strain GB-1).